The sequence spans 32 residues: U6-ctenitoxin-Pr1a (32 aa).

3 disulfide bridges follow: C3–C17, C10–C21, and C16–C30.

As to expression, expressed by the venom gland.

It is found in the secreted. The polypeptide is U6-ctenitoxin-Pr1a (Phoneutria reidyi (Brazilian Amazonian armed spider)).